Consider the following 243-residue polypeptide: uncharacterized protein (243 aa).

The disordered stretch occupies residues 71–120 (KRTNVSQRNRKKGIKNNRPHKDINSSPDWGNAHRGTDWQSEKANGMNRAK). The span at 78 to 88 (RNRKKGIKNNR) shows a compositional bias: basic residues. Ser96 carries the post-translational modification Phosphoserine.

This is an uncharacterized protein from Saccharomyces cerevisiae (strain ATCC 204508 / S288c) (Baker's yeast).